The primary structure comprises 77 residues: Large ribosomal subunit protein uL29 (77 aa).

It belongs to the universal ribosomal protein uL29 family.

This chain is Large ribosomal subunit protein uL29, found in Mycolicibacterium vanbaalenii (strain DSM 7251 / JCM 13017 / BCRC 16820 / KCTC 9966 / NRRL B-24157 / PYR-1) (Mycobacterium vanbaalenii).